The chain runs to 165 residues: uncharacterized protein (165 aa).

A helical transmembrane segment spans residues 16-36 (ASISSILNFFFFYIMEYFVAV).

This sequence belongs to the asfivirus F165R family.

Its subcellular location is the host membrane. This is an uncharacterized protein from African swine fever virus (strain Badajoz 1971 Vero-adapted) (Ba71V).